Reading from the N-terminus, the 1095-residue chain is DNA-directed RNA polymerase subunit beta'' (1095 aa).

Residues Cys220, Cys293, Cys300, and Cys303 each contribute to the Zn(2+) site.

The protein belongs to the RNA polymerase beta' chain family. RpoC2 subfamily. In plastids the minimal PEP RNA polymerase catalytic core is composed of four subunits: alpha, beta, beta', and beta''. When a (nuclear-encoded) sigma factor is associated with the core the holoenzyme is formed, which can initiate transcription. Zn(2+) serves as cofactor.

It is found in the plastid. The protein localises to the chloroplast. It catalyses the reaction RNA(n) + a ribonucleoside 5'-triphosphate = RNA(n+1) + diphosphate. In terms of biological role, DNA-dependent RNA polymerase catalyzes the transcription of DNA into RNA using the four ribonucleoside triphosphates as substrates. The protein is DNA-directed RNA polymerase subunit beta'' of Zygnema circumcarinatum (Green alga).